We begin with the raw amino-acid sequence, 440 residues long: Chromosome partition protein MukF (440 aa).

Residues 208 to 236 (LDETSGNLRELQDTLNAAGDKLQSQLLRI) form a leucine-zipper region.

Belongs to the MukF family. In terms of assembly, interacts, and probably forms a ternary complex, with MukE and MukB via its C-terminal region. The complex formation is stimulated by calcium or magnesium. It is required for an interaction between MukE and MukB.

The protein resides in the cytoplasm. Its subcellular location is the nucleoid. Its function is as follows. Involved in chromosome condensation, segregation and cell cycle progression. May participate in facilitating chromosome segregation by condensation DNA from both sides of a centrally located replisome during cell division. Not required for mini-F plasmid partitioning. Probably acts via its interaction with MukB and MukE. Overexpression results in anucleate cells. It has a calcium binding activity. The chain is Chromosome partition protein MukF from Histophilus somni (strain 129Pt) (Haemophilus somnus).